Here is a 187-residue protein sequence, read N- to C-terminus: Cytochrome b-245 chaperone 1 (187 aa).

The chain crosses the membrane as a helical span at residues glycine 20–glycine 42. The interval glutamate 167–serine 187 is disordered. Phosphoserine is present on residues serine 168 and serine 170.

The protein belongs to the CYBC1 family. As to quaternary structure, interacts with CYBB; CYBC1 may act as a chaperone stabilizing Cytochrome b-245 heterodimer.

The protein resides in the endoplasmic reticulum membrane. Functions as a chaperone necessary for a stable expression of the CYBA and CYBB subunits of the cytochrome b-245 heterodimer. Controls the phagocyte respiratory burst and is essential for innate immunity. This is Cytochrome b-245 chaperone 1 from Rattus norvegicus (Rat).